A 424-amino-acid polypeptide reads, in one-letter code: NuA4 complex subunit EAF3 homolog (424 aa).

The Tudor-knot domain maps to 23 to 73 (VDGERVLCFHGPLIYEAKVLKTKPDATPVEYYIHYAGWSKNWDEWVPENRV). The segment at 88–243 (ARQCGERSKK…STPTTEPAPC (156 aa)) is disordered. Over residues 97 to 106 (KDNKKGSAKA) the composition is skewed to basic residues. Residues 107 to 116 (KKMEQMRNES) are compositionally biased toward basic and acidic residues. Position 119 is a phosphoserine (Ser-119). Positions 122-165 (SKDSNTSQSTASSTPTTSAGPGSKSEAGSTGTTTTNSTANSTTS) are enriched in low complexity. 4 positions are modified to phosphothreonine: Thr-175, Thr-183, Thr-196, and Thr-197. Ser-211 carries the phosphoserine modification. A compositionally biased stretch (low complexity) spans 232–242 (TPSTPTTEPAP). At Thr-235 the chain carries Phosphothreonine. In terms of domain architecture, MRG spans 252–424 (AKVEVKIKIP…VDPEYVRNAQ (173 aa)).

As to quaternary structure, component of the Tip60 chromatin-remodeling complex which contains the catalytic subunit Tip60 and the subunits Domino, Tra1, Brd8, E(Pc), DMAP1, Pontin, Reptin, Ing3, Act87E, BAP55, Mrg15, MrgBP, Gas41 and YL-1.

The protein localises to the nucleus. In terms of biological role, part of the Tip60 chromatin-remodeling complex which is involved in DNA repair. Upon induction of DNA double-strand breaks, this complex acetylates phosphorylated H2AV in nucleosomes and exchanges it with unmodified H2AV. In Drosophila melanogaster (Fruit fly), this protein is NuA4 complex subunit EAF3 homolog (MRG15).